A 585-amino-acid chain; its full sequence is Mitochondrial translation ATP-dependent RNA helicase mrh5 (585 aa).

A Q motif motif is present at residues 87 to 117 (PKFHELPLNQNILDGLSTNFAEYKNSTPLQQ). Residues 121-351 (NALMKSGVSF…SRYITDQLGI (231 aa)) enclose the Helicase ATP-binding domain. Residue 134 to 141 (GWNGSGKS) coordinates ATP. The short motif at 261-264 (DESD) is the DEAD box element. A Helicase C-terminal domain is found at 390–584 (NLPYEFVRFN…PKSYEFDDEH (195 aa)).

Belongs to the DEAD box helicase family. In terms of assembly, component of the MRH5C complex, composed of mrh5, ppr4, mtf2, and sls1. Proteins mtf2 and sls1 form a subcomplex that serves as a scaffold to bring mrh5 and ppr4 together. The MRH5C complex associates with the small subunit of the mitochondrial ribosome.

It localises to the mitochondrion. The catalysed reaction is ATP + H2O = ADP + phosphate + H(+). In terms of biological role, translation activation factor that as part of the MRH5C complex specifically recruits cox1 mRNA to the mitochondrial ribosome for translation initiation. This chain is Mitochondrial translation ATP-dependent RNA helicase mrh5, found in Schizosaccharomyces pombe (strain 972 / ATCC 24843) (Fission yeast).